The following is a 196-amino-acid chain: Riboflavin transporter RibU (196 aa).

The next 5 membrane-spanning stretches (helical) occupy residues 14-34, 46-66, 80-100, 120-140, and 164-184; these read LIAI…VPII, IVPV…WVIL, VNTY…ITVL, LISS…FVAI, and MVLP…MIIL.

It belongs to the prokaryotic riboflavin transporter (P-RFT) (TC 2.A.87) family. As to quaternary structure, in E.coli forms a stable energy-coupling factor (ECF) transporter complex probably composed of a membrane-embedded substrate-binding protein (S component), 2 ATP-binding proteins (A components) and 2 transmembrane proteins (T component). May be able to interact with more than 1 S component at a time.

It is found in the cell membrane. Its function is as follows. Probable riboflavin-binding protein that interacts with the energy-coupling factor (ECF) ABC-transporter complex. Unlike classic ABC transporters this ECF transporter provides the energy necessary to transport a number of different substrates. The substrates themselves are bound by transmembrane, not extracytoplasmic soluble proteins and transport it into cells. This is Riboflavin transporter RibU (ribU) from Leuconostoc mesenteroides subsp. mesenteroides (strain ATCC 8293 / DSM 20343 / BCRC 11652 / CCM 1803 / JCM 6124 / NCDO 523 / NBRC 100496 / NCIMB 8023 / NCTC 12954 / NRRL B-1118 / 37Y).